Here is a 267-residue protein sequence, read N- to C-terminus: Malonyl-[acyl-carrier protein] O-methyltransferase (267 aa).

This sequence belongs to the methyltransferase superfamily.

It catalyses the reaction malonyl-[ACP] + S-adenosyl-L-methionine = malonyl-[ACP] methyl ester + S-adenosyl-L-homocysteine. It functions in the pathway cofactor biosynthesis; biotin biosynthesis. Functionally, converts the free carboxyl group of a malonyl-thioester to its methyl ester by transfer of a methyl group from S-adenosyl-L-methionine (SAM). It allows to synthesize pimeloyl-ACP via the fatty acid synthetic pathway. This Yersinia pestis protein is Malonyl-[acyl-carrier protein] O-methyltransferase.